Consider the following 162-residue polypeptide: UPF0460 protein y4xD (162 aa).

The protein belongs to the UPF0460 family.

The polypeptide is UPF0460 protein y4xD (Sinorhizobium fredii (strain NBRC 101917 / NGR234)).